We begin with the raw amino-acid sequence, 197 residues long: 22.7 kDa class IV heat shock protein (197 aa).

The first 28 residues, 1 to 28 (MSLKPLNMLLVPFLLLILAADFPLKAKA), serve as a signal peptide directing secretion. The sHSP domain occupies 68–184 (PSITLSHARV…GPRMVSIVEE (117 aa)). The short motif at 194–197 (DELK) is the Prevents secretion from ER element.

It belongs to the small heat shock protein (HSP20) family. Forms oligomeric structures.

The protein localises to the endoplasmic reticulum lumen. This chain is 22.7 kDa class IV heat shock protein (HSP22.7), found in Pisum sativum (Garden pea).